The chain runs to 294 residues: Pyridoxal 5'-phosphate synthase subunit PdxS (294 aa).

Asp24 serves as a coordination point for D-ribose 5-phosphate. Lys81 serves as the catalytic Schiff-base intermediate with D-ribose 5-phosphate. Gly153 is a D-ribose 5-phosphate binding site. D-glyceraldehyde 3-phosphate is bound at residue Arg165. D-ribose 5-phosphate contacts are provided by residues Gly214 and 235–236; that span reads GS.

This sequence belongs to the PdxS/SNZ family. As to quaternary structure, in the presence of PdxT, forms a dodecamer of heterodimers.

It carries out the reaction aldehydo-D-ribose 5-phosphate + D-glyceraldehyde 3-phosphate + L-glutamine = pyridoxal 5'-phosphate + L-glutamate + phosphate + 3 H2O + H(+). It functions in the pathway cofactor biosynthesis; pyridoxal 5'-phosphate biosynthesis. In terms of biological role, catalyzes the formation of pyridoxal 5'-phosphate from ribose 5-phosphate (RBP), glyceraldehyde 3-phosphate (G3P) and ammonia. The ammonia is provided by the PdxT subunit. Can also use ribulose 5-phosphate and dihydroxyacetone phosphate as substrates, resulting from enzyme-catalyzed isomerization of RBP and G3P, respectively. The polypeptide is Pyridoxal 5'-phosphate synthase subunit PdxS (Anoxybacillus flavithermus (strain DSM 21510 / WK1)).